A 355-amino-acid chain; its full sequence is 5-formaminoimidazole-4-carboxamide-1-(beta)-D-ribofuranosyl 5'-monophosphate synthetase (355 aa).

H27 and S94 together coordinate 5-amino-1-(5-phospho-beta-D-ribosyl)imidazole-4-carboxamide. Residues 101–332 (TESFAELAVP…YSDMIEENLS (232 aa)) enclose the ATP-grasp domain. ATP contacts are provided by residues 144 to 195 (PEKI…TRYY) and E225. N254 is a 5-amino-1-(5-phospho-beta-D-ribosyl)imidazole-4-carboxamide binding site. E292 and E305 together coordinate Mg(2+).

It belongs to the phosphohexose mutase family. Requires Mg(2+) as cofactor. Mn(2+) is required as a cofactor.

The enzyme catalyses 5-amino-1-(5-phospho-beta-D-ribosyl)imidazole-4-carboxamide + formate + ATP = 5-formamido-1-(5-phospho-D-ribosyl)imidazole-4-carboxamide + ADP + phosphate. Its pathway is purine metabolism; IMP biosynthesis via de novo pathway; 5-formamido-1-(5-phospho-D-ribosyl)imidazole-4-carboxamide from 5-amino-1-(5-phospho-D-ribosyl)imidazole-4-carboxamide (formate route): step 1/1. Its function is as follows. Catalyzes the ATP- and formate-dependent formylation of 5-aminoimidazole-4-carboxamide-1-beta-d-ribofuranosyl 5'-monophosphate (AICAR) to 5-formaminoimidazole-4-carboxamide-1-beta-d-ribofuranosyl 5'-monophosphate (FAICAR) in the absence of folates. The sequence is that of 5-formaminoimidazole-4-carboxamide-1-(beta)-D-ribofuranosyl 5'-monophosphate synthetase from Methanococcoides burtonii (strain DSM 6242 / NBRC 107633 / OCM 468 / ACE-M).